A 187-amino-acid polypeptide reads, in one-letter code: MSKSASRARLADIIRTRSFGRGEITLASGRKSDFYFNLKPTMLDPEGAALLAELTYETLRDEKVDYVGGLEMGAVPLAGAIAQLSWLKNHPISAFFVRKKPKEHGARLSVEGLAKGESLAGKRCVIVEDVTTTGGSAIKAVEAVKESGAEIVLVLTMVDREEGATEAFAAAGLPFRSLYKASEFLNT.

Residues Arg-98, Lys-99, Lys-102, His-104, and 128-136 (EDVTTTGGS) contribute to the 5-phospho-alpha-D-ribose 1-diphosphate site. Residues Thr-132 and Arg-160 each contribute to the orotate site.

This sequence belongs to the purine/pyrimidine phosphoribosyltransferase family. PyrE subfamily. Homodimer. Requires Mg(2+) as cofactor.

The catalysed reaction is orotidine 5'-phosphate + diphosphate = orotate + 5-phospho-alpha-D-ribose 1-diphosphate. The protein operates within pyrimidine metabolism; UMP biosynthesis via de novo pathway; UMP from orotate: step 1/2. In terms of biological role, catalyzes the transfer of a ribosyl phosphate group from 5-phosphoribose 1-diphosphate to orotate, leading to the formation of orotidine monophosphate (OMP). In Rhodopseudomonas palustris (strain ATCC BAA-98 / CGA009), this protein is Orotate phosphoribosyltransferase.